The chain runs to 367 residues: Methylthioribose-1-phosphate isomerase (367 aa).

Residues 48-50, Arg91, and Gln215 contribute to the substrate site; that span reads RGA. Catalysis depends on Asp256, which acts as the Proton donor. 266–267 provides a ligand contact to substrate; sequence NK.

It belongs to the eIF-2B alpha/beta/delta subunits family. MtnA subfamily.

It catalyses the reaction 5-(methylsulfanyl)-alpha-D-ribose 1-phosphate = 5-(methylsulfanyl)-D-ribulose 1-phosphate. It participates in amino-acid biosynthesis; L-methionine biosynthesis via salvage pathway; L-methionine from S-methyl-5-thio-alpha-D-ribose 1-phosphate: step 1/6. In terms of biological role, catalyzes the interconversion of methylthioribose-1-phosphate (MTR-1-P) into methylthioribulose-1-phosphate (MTRu-1-P). The polypeptide is Methylthioribose-1-phosphate isomerase (Syntrophus aciditrophicus (strain SB)).